The sequence spans 413 residues: MRSPRVLGLVLAGGAGKRLAPLTADRAKPAVPFGGIYRLVDFVLSNLVNGGYLRIAVLTQYKSHSLDRHITTTWRMSNLLGNYVTPVPAQQRLGPQWFAGSADAIHQSLNLVHDEAPDVVVVFGADHVYRMDPRQMVAQHLETGAGVTVAGLRVPRSEGSAFGVIRTADDGVTIAEFLEKPADPPGLPGSPDEIFASMGNYVFTTDVLIDALRADAADPESVHDMGGSIVPMLVEQGTAAVYDFAANQVPGALERDHGYWRDVGTLDSYFDAHMDLCALDPVFNLYNRDWPIYTNVPPSVPPAKFVHDTPGRVGVATDSIVSNGVIISGGAVRRSVLSPGVRVNSWSVVENAVVMDNSVIGRRAVVRDAILDKNVVVPPGATVGVDKEHDRARGYQVSEAGVTVVGKGVTIAD.

Residues Gly-163, 179-180 (EK), and Ser-197 contribute to the alpha-D-glucose 1-phosphate site.

Belongs to the bacterial/plant glucose-1-phosphate adenylyltransferase family. In terms of assembly, homotetramer.

It catalyses the reaction alpha-D-glucose 1-phosphate + ATP + H(+) = ADP-alpha-D-glucose + diphosphate. The protein operates within glycan biosynthesis; glycogen biosynthesis. Involved in the biosynthesis of ADP-glucose, a building block required for the elongation reactions to produce glycogen. Catalyzes the reaction between ATP and alpha-D-glucose 1-phosphate (G1P) to produce pyrophosphate and ADP-Glc. This Parafrankia sp. (strain EAN1pec) protein is Glucose-1-phosphate adenylyltransferase.